Here is a 485-residue protein sequence, read N- to C-terminus: Ribulose bisphosphate carboxylase large chain (485 aa).

Substrate contacts are provided by asparagine 124 and threonine 174. Lysine 176 acts as the Proton acceptor in catalysis. Lysine 178 provides a ligand contact to substrate. Lysine 202, aspartate 204, and glutamate 205 together coordinate Mg(2+). The residue at position 202 (lysine 202) is an N6-carboxylysine. Histidine 294 functions as the Proton acceptor in the catalytic mechanism. Residues arginine 295, histidine 327, and serine 379 each contribute to the substrate site.

This sequence belongs to the RuBisCO large chain family. Type I subfamily. In terms of assembly, heterohexadecamer of 8 large chains and 8 small chains. It depends on Mg(2+) as a cofactor.

It catalyses the reaction 2 (2R)-3-phosphoglycerate + 2 H(+) = D-ribulose 1,5-bisphosphate + CO2 + H2O. The catalysed reaction is D-ribulose 1,5-bisphosphate + O2 = 2-phosphoglycolate + (2R)-3-phosphoglycerate + 2 H(+). RuBisCO catalyzes two reactions: the carboxylation of D-ribulose 1,5-bisphosphate, the primary event in carbon dioxide fixation, as well as the oxidative fragmentation of the pentose substrate. Both reactions occur simultaneously and in competition at the same active site. This is Ribulose bisphosphate carboxylase large chain from Rhodopseudomonas palustris (strain ATCC BAA-98 / CGA009).